The primary structure comprises 95 residues: Integration host factor subunit beta (95 aa).

It belongs to the bacterial histone-like protein family. Heterodimer of an alpha and a beta chain.

In terms of biological role, this protein is one of the two subunits of integration host factor, a specific DNA-binding protein that functions in genetic recombination as well as in transcriptional and translational control. The polypeptide is Integration host factor subunit beta (Klebsiella pneumoniae subsp. pneumoniae (strain ATCC 700721 / MGH 78578)).